Consider the following 130-residue polypeptide: Larval cuticle protein 1 (130 aa).

Positions 1 to 16 are cleaved as a signal peptide; the sequence is MFKFVMICAVLGLAVA. The 62-residue stretch at 43–104 folds into the Chitin-binding type R&amp;R domain; the sequence is ADGFDSSLHT…PSGAWIPTPP (62 aa).

In terms of biological role, component of the larval cuticle. The sequence is that of Larval cuticle protein 1 (Lcp1) from Drosophila melanogaster (Fruit fly).